Consider the following 146-residue polypeptide: Large ribosomal subunit protein uL15 (146 aa).

The segment at 1–46 (MAIELHDLKPAPGAHKAKTRVGRGEGSKGKTAGRGTKGTGARKNVP) is disordered. Residues 29–43 (GKTAGRGTKGTGARK) show a composition bias toward low complexity.

Belongs to the universal ribosomal protein uL15 family. As to quaternary structure, part of the 50S ribosomal subunit.

Its function is as follows. Binds to the 23S rRNA. The protein is Large ribosomal subunit protein uL15 of Cutibacterium acnes (strain DSM 16379 / KPA171202) (Propionibacterium acnes).